We begin with the raw amino-acid sequence, 262 residues long: Sugar fermentation stimulation protein homolog (262 aa).

The protein belongs to the SfsA family.

This is Sugar fermentation stimulation protein homolog from Lawsonia intracellularis (strain PHE/MN1-00).